We begin with the raw amino-acid sequence, 680 residues long: Methionine--tRNA ligase (680 aa).

A 'HIGH' region motif is present at residues 14 to 24 (PYANGPIHLGH). Residues Cys145, Cys148, Cys158, and Cys161 each contribute to the Zn(2+) site. Positions 330–334 (KMSKS) match the 'KMSKS' region motif. Lys333 provides a ligand contact to ATP. The tRNA-binding domain maps to 579-680 (DFAKVDFRIA…DGAQPGMRVK (102 aa)).

The protein belongs to the class-I aminoacyl-tRNA synthetase family. MetG type 1 subfamily. In terms of assembly, homodimer. It depends on Zn(2+) as a cofactor.

The protein resides in the cytoplasm. It carries out the reaction tRNA(Met) + L-methionine + ATP = L-methionyl-tRNA(Met) + AMP + diphosphate. Is required not only for elongation of protein synthesis but also for the initiation of all mRNA translation through initiator tRNA(fMet) aminoacylation. The polypeptide is Methionine--tRNA ligase (Hydrogenovibrio crunogenus (strain DSM 25203 / XCL-2) (Thiomicrospira crunogena)).